The sequence spans 462 residues: Chromosomal replication initiator protein DnaA (462 aa).

Positions 1–84 (MAVSLWQQCI…RFDIGSRPSA (84 aa)) are domain I, interacts with DnaA modulators. The tract at residues 84–125 (APRPVQATAAVERPKFEQNTKPAKTSFNVNSPEPAMAANHRS) is domain II. The interval 126 to 342 (NINRTYQFEN…GALNRVIANA (217 aa)) is domain III, AAA+ region. Glycine 170, glycine 172, lysine 173, and threonine 174 together coordinate ATP. The segment at 343 to 462 (NFTGRPITID…YANLIRTLSS (120 aa)) is domain IV, binds dsDNA.

Belongs to the DnaA family. In terms of assembly, oligomerizes as a right-handed, spiral filament on DNA at oriC.

Its subcellular location is the cytoplasm. Functionally, plays an essential role in the initiation and regulation of chromosomal replication. ATP-DnaA binds to the origin of replication (oriC) to initiate formation of the DNA replication initiation complex once per cell cycle. Binds the DnaA box (a 9 base pair repeat at the origin) and separates the double-stranded (ds)DNA. Forms a right-handed helical filament on oriC DNA; dsDNA binds to the exterior of the filament while single-stranded (ss)DNA is stabiized in the filament's interior. The ATP-DnaA-oriC complex binds and stabilizes one strand of the AT-rich DNA unwinding element (DUE), permitting loading of DNA polymerase. After initiation quickly degrades to an ADP-DnaA complex that is not apt for DNA replication. Binds acidic phospholipids. The polypeptide is Chromosomal replication initiator protein DnaA (Shewanella sediminis (strain HAW-EB3)).